Reading from the N-terminus, the 817-residue chain is Verprolin (817 aa).

Residues 1–15 (MAGAPAPPPPPPPPA) show a composition bias toward pro residues. The tract at residues 1–752 (MAGAPAPPPP…THTNQPDVDV (752 aa)) is disordered. The WH2 1 domain occupies 30-47 (GRDALLGDIRKGMKLKKA). Basic and acidic residues predominate over residues 37-51 (DIRKGMKLKKAETND). Residues 62-79 (VSSASGSSGTVSSKGPSM) are compositionally biased toward low complexity. Residues 87–106 (MGAPQLGDILAGGIPKLKHI) form the WH2 2 domain. Residue Asn109 is glycosylated (N-linked (GlcNAc...) asparagine). Over residues 119–180 (SAPPIPGAVP…VPSSPAPPLP (62 aa)) the composition is skewed to pro residues. N-linked (GlcNAc...) asparagine glycosylation is present at Asn212. A compositionally biased stretch (pro residues) spans 236–245 (PQAPPPPPTP). Polar residues predominate over residues 254–265 (IKPTDNAVSPPS). Pro residues predominate over residues 306 to 335 (SQPPLPSSAPPIPTSHAPPLPPTAPPPPSL). Positions 336-348 (PNVTSAPKKATSA) are enriched in low complexity. Residue Asn337 is glycosylated (N-linked (GlcNAc...) asparagine). Residues 372–382 (PVPPTLAPPLP) are compositionally biased toward pro residues. Asn383 is a glycosylation site (N-linked (GlcNAc...) asparagine). The segment covering 383–395 (NTTSVPPNKASSM) has biased composition (low complexity). Positions 396 to 407 (PAPPPPPPPPPG) are enriched in pro residues. Over residues 408 to 422 (AFSTSSALSASSIPL) the composition is skewed to low complexity. Positions 423-432 (APLPPPPPPS) are enriched in pro residues. Residues 447-469 (LTTNKPSASSKQSKISSSSSSSA) are compositionally biased toward low complexity. Residues 502 to 516 (DKQEDVIGSSKDDNV) are compositionally biased toward basic and acidic residues. The span at 518–534 (PSPISPSINPPKQSSQN) shows a compositional bias: low complexity. Ser519 is subject to Phosphoserine. Residues 557–579 (APPPHTDAMAPPLPPSAPPPPIT) show a composition bias toward pro residues. Positions 588-597 (GDDHTNDKSE) are enriched in basic and acidic residues. Positions 649-661 (PPSPPVAAAPPLP) are enriched in pro residues. Positions 713 to 737 (MDTGTSNSPSKNLKQRLFSTGGSTL) are enriched in polar residues. Ser762 is modified (phosphoserine). N-linked (GlcNAc...) asparagine glycans are attached at residues Asn784 and Asn796. The segment at 786-806 (SQMPKPRPFQNKTKLYPSGKG) is disordered.

It belongs to the verprolin family. Post-translationally, N-glycosylated.

It is found in the cytoplasm. Its subcellular location is the cytoskeleton. In terms of biological role, involved in cytoskeletal organization and cellular growth. May exert its effects on the cytoskeleton directly, or indirectly via proline-binding proteins (e.g. profilin) or proteins possessing SH3 domains. This is Verprolin (VRP1) from Saccharomyces cerevisiae (strain ATCC 204508 / S288c) (Baker's yeast).